Reading from the N-terminus, the 82-residue chain is Protein RALF-like 8 (82 aa).

A signal peptide spans 1–28 (MGMSKSIKVILSLALVVFLALAGTKVEA). 2 disulfide bridges follow: C47–C55 and C67–C73.

It belongs to the plant rapid alkalinization factor (RALF) family. As to expression, expressed in leaves and flowers.

The protein localises to the secreted. Cell signaling peptide that may regulate plant stress, growth, and development. Mediates a rapid alkalinization of extracellular space by mediating a transient increase in the cytoplasmic Ca(2+) concentration leading to a calcium-dependent signaling events through a cell surface receptor and a concomitant activation of some intracellular mitogen-activated protein kinases. This is Protein RALF-like 8 (RALFL8) from Arabidopsis thaliana (Mouse-ear cress).